The following is a 550-amino-acid chain: Chaperonin GroEL (550 aa).

Residues 30–33 (TLGP), lysine 51, 87–91 (DGTTT), glycine 415, and aspartate 496 contribute to the ATP site. A disordered region spans residues 528-550 (EGGDMPAMPPGGMGGMGGMGGMM). The span at 538–550 (GGMGGMGGMGGMM) shows a compositional bias: gly residues.

Belongs to the chaperonin (HSP60) family. In terms of assembly, forms a cylinder of 14 subunits composed of two heptameric rings stacked back-to-back. Interacts with the co-chaperonin GroES.

It localises to the cytoplasm. It catalyses the reaction ATP + H2O + a folded polypeptide = ADP + phosphate + an unfolded polypeptide.. Together with its co-chaperonin GroES, plays an essential role in assisting protein folding. The GroEL-GroES system forms a nano-cage that allows encapsulation of the non-native substrate proteins and provides a physical environment optimized to promote and accelerate protein folding. The protein is Chaperonin GroEL of Chlorobium phaeobacteroides (strain BS1).